The sequence spans 179 residues: Large ribosomal subunit protein uL10 (179 aa).

The segment at 137–179 is binds L7/L12 dimers; it reads KEELYAMLVGRVKAPITGLVFALSGILRNLVYVLNAIKEKKSE.

Part of the ribosomal stalk of the 50S ribosomal subunit. The N-terminus interacts with L11 and 23S rRNA to form the base of the stalk. The C-terminus forms an elongated spine to which 3 L12 dimers bind in a sequential fashion forming a heptameric L10(L12)2(L12)2(L12)2 complex.

Its function is as follows. Forms part of the ribosomal stalk, playing a central role in the interaction of the ribosome with GTP-bound translation factors (such as IF-2, EF-Tu, EF-G and RF3). The chain is Large ribosomal subunit protein uL10 (rplJ) from Thermotoga maritima (strain ATCC 43589 / DSM 3109 / JCM 10099 / NBRC 100826 / MSB8).